We begin with the raw amino-acid sequence, 333 residues long: Dioxygenase cnsJ (333 aa).

Fe cation is bound by residues His153, Asp155, and His235. The disordered stretch occupies residues Asn309–Ile333. Basic and acidic residues predominate over residues Asn323–Ile333.

Belongs to the PhyH family. In terms of assembly, homodimer. Requires Fe cation as cofactor.

Its pathway is alkaloid biosynthesis. Functionally, dioxygenase; part of the gene cluster that mediates the biosynthesis of communesins, a prominent class of indole alkaloids with great potential as pharmaceuticals. Communesins are biosynthesized by the coupling of tryptamine and aurantioclavine, two building blocks derived from L-tryptophan. The L-tryptophan decarboxylase cnsB converts L-tryptophan to tryptamine, whereas the tryptophan dimethylallyltransferase cnsF converts L-tryptophan to 4-dimethylallyl tryptophan which is further transformed to aurantioclavine by the aurantioclavine synthase cnsA, probably aided by the catalase cnsD. The cytochrome P450 monooxygenase cnsC catalyzes the heterodimeric coupling between the two different indole moieties, tryptamine and aurantioclavine, to construct vicinal quaternary stereocenters and yield the heptacyclic communesin scaffold. The O-methyltransferase cnsE then methylates the communesin scaffold to produce communesin K, the simplest characterized communesin that contains the heptacyclic core. The dioxygenase cnsJ converts communesin K into communesin I. Acylation to introduce the hexadienyl group at position N16 of communesin I by the acyltransferase cnsK leads to the production of communesin B. The hexadienyl group is produced by the highly reducing polyketide synthase cnsI, before being hydrolytically removed from cnsI by the serine hydrolase cnsH, converted into hexadienyl-CoA by the CoA ligase cnsG, and then transferred to communesin I by cnsK. Surprisingly, cnsK may also be a promiscuous acyltransferase that can tolerate a range of acyl groups, including acetyl-, propionyl-, and butyryl-CoA, which lead to communesins A, G and H respectively. The roles of the alpha-ketoglutarate-dependent dioxygenases cnsM and cnsP have still to be determined. The polypeptide is Dioxygenase cnsJ (Penicillium expansum (Blue mold rot fungus)).